Reading from the N-terminus, the 244-residue chain is MDRYGEKQQQQQMFASYVDASLLAASGEVQGERPRARRRRRRGARCVGGGGGGGEVDGGDPKKRRLSDEQVEMLELSFREERKLETGRKVHLASELGLDPKQVAVWFQNRRARHKSKLLEEEFSKLKHAHDAAILHKCHLENEVLRLKERLVVAEEEVRRLRSAAGSHTASGEGGDIMGLGGSGACVAGSPSSSFSTGTCQPPSFGGGGGGGDHLGDDDLVYVPEYGGYADNSVVEWFSLYGLI.

Residues 25-64 (ASGEVQGERPRARRRRRRGARCVGGGGGGGEVDGGDPKKR) form a disordered region. Basic residues predominate over residues 35-44 (RARRRRRRGA). Gly residues predominate over residues 46–56 (CVGGGGGGGEV). Positions 59 to 118 (GDPKKRRLSDEQVEMLELSFREERKLETGRKVHLASELGLDPKQVAVWFQNRRARHKSKL) form a DNA-binding region, homeobox. Positions 108-167 (QNRRARHKSKLLEEEFSKLKHAHDAAILHKCHLENEVLRLKERLVVAEEEVRRLRSAAGS) form a coiled coil.

This sequence belongs to the HD-ZIP homeobox family. Class I subfamily. As to expression, expressed in roots, stems, leaf blades and panicles.

The protein localises to the nucleus. Probable transcription factor. This Oryza sativa subsp. indica (Rice) protein is Homeobox-leucine zipper protein HOX14 (HOX14).